Here is a 170-residue protein sequence, read N- to C-terminus: Co-chaperone protein HscB homolog (170 aa).

Residues 5–79 (DHFSLFGLPT…RARYLCEQAG (75 aa)) enclose the J domain.

This sequence belongs to the HscB family. As to quaternary structure, interacts with HscA and stimulates its ATPase activity.

Co-chaperone involved in the maturation of iron-sulfur cluster-containing proteins. Seems to help targeting proteins to be folded toward HscA. This chain is Co-chaperone protein HscB homolog, found in Bordetella bronchiseptica (strain ATCC BAA-588 / NCTC 13252 / RB50) (Alcaligenes bronchisepticus).